Reading from the N-terminus, the 203-residue chain is Ras-like protein family member 10B (203 aa).

The segment at 1 to 203 is small GTPase-like; it reads MVSTYRVAVL…ALRRNRCAIM (203 aa). 11-18 lines the GTP pocket; it reads GARGVGKS. An Effector region motif is present at residues 33–42; it reads CVPTTARRLY. Residues 59-62 and 128-131 contribute to the GTP site; these read DFPP and NKRD. C200 carries the cysteine methyl ester modification. Residue C200 is the site of S-geranylgeranyl cysteine attachment. The propeptide at 201–203 is removed in mature form; sequence AIM.

Belongs to the small GTPase superfamily. Ras family. As to quaternary structure, interacts with CADPS. As to expression, expressed at high levels in skeletal muscle and, at much lower levels, in heart, brain and pancreas.

Its subcellular location is the cell membrane. It catalyses the reaction GTP + H2O = GDP + phosphate + H(+). Its function is as follows. May facilitate the release of atrial natriuretic peptide by cardiomyocytes and hence play a role in the regulation of arterial pressure. The polypeptide is Ras-like protein family member 10B (RASL10B) (Homo sapiens (Human)).